The following is a 90-amino-acid chain: MGKGTPSLGKRHNKSHTLCNRCGRRSFHVQKKTCSSCGYPAAKMRSHNWALKAKRRRTTGTGRMAYLKHVTRRFKNGFQTGVAKAQTPSA.

An A20-type zinc finger spans residues 13–46; the sequence is NKSHTLCNRCGRRSFHVQKKTCSSCGYPAAKMRS. Residues cysteine 19, cysteine 22, cysteine 34, and cysteine 37 each coordinate Zn(2+).

The protein belongs to the eukaryotic ribosomal protein eL37 family. Component of the large ribosomal subunit. Mature ribosomes consist of a small (40S) and a large (60S) subunit. The 40S subunit contains about 32 different proteins and 1 molecule of RNA (18S). The 60S subunit contains 45 different proteins and 3 molecules of RNA (25S, 5.8S and 5S). Requires Zn(2+) as cofactor.

The protein resides in the cytoplasm. Component of the ribosome, a large ribonucleoprotein complex responsible for the synthesis of proteins in the cell. The small ribosomal subunit (SSU) binds messenger RNAs (mRNAs) and translates the encoded message by selecting cognate aminoacyl-transfer RNA (tRNA) molecules. The large subunit (LSU) contains the ribosomal catalytic site termed the peptidyl transferase center (PTC), which catalyzes the formation of peptide bonds, thereby polymerizing the amino acids delivered by tRNAs into a polypeptide chain. The nascent polypeptides leave the ribosome through a tunnel in the LSU and interact with protein factors that function in enzymatic processing, targeting, and the membrane insertion of nascent chains at the exit of the ribosomal tunnel. In Candida albicans (strain SC5314 / ATCC MYA-2876) (Yeast), this protein is Large ribosomal subunit protein eL37.